Consider the following 182-residue polypeptide: ATP synthase subunit delta (182 aa).

It belongs to the ATPase delta chain family. As to quaternary structure, F-type ATPases have 2 components, F(1) - the catalytic core - and F(0) - the membrane proton channel. F(1) has five subunits: alpha(3), beta(3), gamma(1), delta(1), epsilon(1). F(0) has three main subunits: a(1), b(2) and c(10-14). The alpha and beta chains form an alternating ring which encloses part of the gamma chain. F(1) is attached to F(0) by a central stalk formed by the gamma and epsilon chains, while a peripheral stalk is formed by the delta and b chains.

It localises to the cell inner membrane. Functionally, f(1)F(0) ATP synthase produces ATP from ADP in the presence of a proton or sodium gradient. F-type ATPases consist of two structural domains, F(1) containing the extramembraneous catalytic core and F(0) containing the membrane proton channel, linked together by a central stalk and a peripheral stalk. During catalysis, ATP synthesis in the catalytic domain of F(1) is coupled via a rotary mechanism of the central stalk subunits to proton translocation. Its function is as follows. This protein is part of the stalk that links CF(0) to CF(1). It either transmits conformational changes from CF(0) to CF(1) or is implicated in proton conduction. This is ATP synthase subunit delta from Sulfurihydrogenibium azorense (strain DSM 15241 / OCM 825 / Az-Fu1).